A 503-amino-acid chain; its full sequence is Maturase K (503 aa).

It belongs to the intron maturase 2 family. MatK subfamily.

The protein resides in the plastid. It is found in the chloroplast. Its function is as follows. Usually encoded in the trnK tRNA gene intron. Probably assists in splicing its own and other chloroplast group II introns. The protein is Maturase K of Vicia sativa (Spring vetch).